The sequence spans 361 residues: MPVDSLVGKTPESSAGIHGWGAYVPVYRIPTREIARVWGWPDHQWKALDVYEKAVGGVDEDSTTMGVEAARNAIARARVDPASIGAVFFGSESKPYAVKPSATIIAEALGITPVTMASDLEFACRAASEGMRASIGLVASGVVGYTLVVGSDTAQASPGDVLEFSASSGAAAFVIGPSKGAAAVFESSFTYVTDTPDFWRRGLKPYPSHGEGFTGEPAYFHHIESAVKGLFEKTGLSPGDFDYAIFHQPNGKFPVKVAKKLGFTMEQVKPGLVTPFIGNTYNASALLGLVKVLDVAKPGDRILVAPFGSGAGSDAYSLIVTDAIEEAKPLAQPLEYYLKRRIEIDYGVYAKIRGKLVVRKL.

The active-site Proton donor/acceptor is the Glu-92. Cys-124 functions as the Acyl-thioester intermediate in the catalytic mechanism. (3S)-3-hydroxy-3-methylglutaryl-CoA-binding residues include Cys-124, Ser-165, Thr-214, and His-247. The active-site Proton donor/acceptor is His-247. Lys-252 contributes to the CoA binding site. 3 residues coordinate (3S)-3-hydroxy-3-methylglutaryl-CoA: Lys-256, Asn-279, and Ser-309.

This sequence belongs to the thiolase-like superfamily. Archaeal HMG-CoA synthase family. Interacts with acetoacetyl-CoA thiolase that catalyzes the precedent step in the pathway and with a DUF35 protein. The acetoacetyl-CoA thiolase/HMG-CoA synthase complex channels the intermediate via a fused CoA-binding site, which allows for efficient coupling of the endergonic thiolase reaction with the exergonic HMGCS reaction.

It carries out the reaction acetoacetyl-CoA + acetyl-CoA + H2O = (3S)-3-hydroxy-3-methylglutaryl-CoA + CoA + H(+). It participates in metabolic intermediate biosynthesis; (R)-mevalonate biosynthesis; (R)-mevalonate from acetyl-CoA: step 2/3. Functionally, catalyzes the condensation of acetyl-CoA with acetoacetyl-CoA to form 3-hydroxy-3-methylglutaryl-CoA (HMG-CoA). Functions in the mevalonate (MVA) pathway leading to isopentenyl diphosphate (IPP), a key precursor for the biosynthesis of isoprenoid compounds that are building blocks of archaeal membrane lipids. The sequence is that of Hydroxymethylglutaryl-CoA synthase from Aeropyrum pernix (strain ATCC 700893 / DSM 11879 / JCM 9820 / NBRC 100138 / K1).